A 617-amino-acid chain; its full sequence is Probable Xaa-Pro aminopeptidase P (617 aa).

Mn(2+)-binding residues include aspartate 414, aspartate 425, glutamate 523, and glutamate 537.

The protein belongs to the peptidase M24B family. Mn(2+) serves as cofactor.

The enzyme catalyses Release of any N-terminal amino acid, including proline, that is linked to proline, even from a dipeptide or tripeptide.. Functionally, catalyzes the removal of a penultimate prolyl residue from the N-termini of peptides. The chain is Probable Xaa-Pro aminopeptidase P (AMPP) from Blastomyces gilchristii (strain SLH14081) (Blastomyces dermatitidis).